Here is a 360-residue protein sequence, read N- to C-terminus: MKASLLNKLDVLQDRFEELTALLGDGEVISDQAKFRAYSKEYAEVEPIVATYKHLTKVQADLEGAQALLKDSDPDMREMAVEEVREAKEKLAELEGDLQRMLLPKDPNDGRNVFLEIRAGTGGDEAAIFSGDLFRMYSRYAERRGWRVEILSENEGEHGGYKEVIARVEGDNVYGKLKFESGAHRVQRVPATESQGRIHTSACTVAVLPEPDEQEAIEINPADLRVDTYRSSGAGGQHVNKTDSAIRITHLPSGIVVECQEERSQHKNRARAMSWLSAKLNDQQTSAAANAIASERKLLVGSGDRSERIRTYNFAQGRVTDHRVNLTLYSLDEILAGGVDAVIEPLLAEYQADQLAAIGE.

Gln237 carries the post-translational modification N5-methylglutamine.

This sequence belongs to the prokaryotic/mitochondrial release factor family. Methylated by PrmC. Methylation increases the termination efficiency of RF1.

The protein resides in the cytoplasm. Peptide chain release factor 1 directs the termination of translation in response to the peptide chain termination codons UAG and UAA. This Pseudomonas fluorescens (strain SBW25) protein is Peptide chain release factor 1.